Here is a 78-residue protein sequence, read N- to C-terminus: Large ribosomal subunit protein bL28 (78 aa).

It belongs to the bacterial ribosomal protein bL28 family.

In Synechococcus sp. (strain ATCC 27144 / PCC 6301 / SAUG 1402/1) (Anacystis nidulans), this protein is Large ribosomal subunit protein bL28.